Here is a 148-residue protein sequence, read N- to C-terminus: UPF0179 protein Mpal_0949 (148 aa).

The protein belongs to the UPF0179 family.

The polypeptide is UPF0179 protein Mpal_0949 (Methanosphaerula palustris (strain ATCC BAA-1556 / DSM 19958 / E1-9c)).